The chain runs to 367 residues: Lysophosphatidic acid receptor 5 (367 aa).

Residues 1-25 (MQANSSAKSLPTECPDYQPIHHLHL) lie on the Extracellular side of the membrane. The N-linked (GlcNAc...) asparagine glycan is linked to asparagine 4. The chain crosses the membrane as a helical span at residues 26 to 46 (VVYSVVLAAGLPLNALALWVF). Residues 47–54 (LRALRVHS) lie on the Cytoplasmic side of the membrane. Residues 55 to 75 (VVSVYMCNLAASDLLFTLSLP) form a helical membrane-spanning segment. Over 76 to 95 (LRLSYYARHYWPFPDFLCQL) the chain is Extracellular. A disulfide bridge links cysteine 93 with cysteine 174. Residues 96–116 (AGAVFQMNMYGSCIFLTLINV) traverse the membrane as a helical segment. At 117-135 (DRYAAIVHPLRLRHLRRPR) the chain is on the cytoplasmic side. Residues 136–156 (VARLLCLGVWALILVFAVPTI) form a helical membrane-spanning segment. Topologically, residues 157–186 (LAHQPSSCARDGRNVSLCFESFSDKLWKGS) are extracellular. Asparagine 170 is a glycosylation site (N-linked (GlcNAc...) asparagine). Residues 187-207 (LLPLLLLAEALGFLLPLAAVV) traverse the membrane as a helical segment. The Cytoplasmic portion of the chain corresponds to 208-238 (YSSGRVFWTLARPDATRSQRRRKTVRLLLAS). Residues 239–259 (LVIFLLCFVPYNATLAVYGLL) form a helical membrane-spanning segment. Residues 260 to 275 (RGEVVPASSEARKKVR) are Extracellular-facing. Residues 276-296 (GVLMVMVLLAGANCVLDPLVY) form a helical membrane-spanning segment. Over 297–367 (YFSAEGFRNT…FTPSHEDSSF (71 aa)) the chain is Cytoplasmic. Over residues 332–350 (LTETAHASTLTTTSQGQLQ) the composition is skewed to low complexity. Positions 332 to 367 (LTETAHASTLTTTSQGQLQPSDPRSSFTPSHEDSSF) are disordered. Polar residues predominate over residues 351-360 (PSDPRSSFTP).

This sequence belongs to the G-protein coupled receptor 1 family.

It is found in the cell membrane. Its function is as follows. Receptor for lysophosphatidic acid (LPA), a mediator of diverse cellular activities. This Bos taurus (Bovine) protein is Lysophosphatidic acid receptor 5 (LPAR5).